The sequence spans 229 residues: Sperm-associated microtubule inner protein 5 (229 aa).

Residues 181 to 201 (PEFSGPGQTPPSEDPQAPRPC) are disordered.

As to quaternary structure, microtubule inner protein component of sperm flagellar doublet microtubules. Expressed in testis (at protein level).

It is found in the cytoplasm. The protein localises to the cytoskeleton. Its subcellular location is the flagellum axoneme. It localises to the nucleus. In terms of biological role, microtubule inner protein (MIP) part of the dynein-decorated doublet microtubules (DMTs) in flagellum axoneme. May serve to reinforce and thus stabilize the microtubule structure in the sperm flagella. The sequence is that of Sperm-associated microtubule inner protein 5 (Spmip5) from Mus musculus (Mouse).